Consider the following 199-residue polypeptide: A-type ATP synthase subunit E (199 aa).

Belongs to the V-ATPase E subunit family. Has multiple subunits with at least A(3), B(3), C, D, E, F, H, I and proteolipid K(x).

Its subcellular location is the cell membrane. Component of the A-type ATP synthase that produces ATP from ADP in the presence of a proton gradient across the membrane. In Pyrococcus abyssi (strain GE5 / Orsay), this protein is A-type ATP synthase subunit E.